The primary structure comprises 172 residues: L-amino acid oxidase (172 aa).

FAD is bound at residue 44 to 47 (GPMR). The substrate site is built by Arg47 and His103.

This sequence belongs to the flavin monoamine oxidase family. FIG1 subfamily. In terms of assembly, heterodimer; non-covalently linked. The cofactor is FAD. N-glycosylated. As to expression, expressed by the venom gland.

It localises to the secreted. It carries out the reaction an L-alpha-amino acid + O2 + H2O = a 2-oxocarboxylate + H2O2 + NH4(+). It catalyses the reaction L-leucine + O2 + H2O = 4-methyl-2-oxopentanoate + H2O2 + NH4(+). The catalysed reaction is L-phenylalanine + O2 + H2O = 3-phenylpyruvate + H2O2 + NH4(+). The enzyme catalyses L-tryptophan + O2 + H2O = indole-3-pyruvate + H2O2 + NH4(+). It carries out the reaction L-methionine + O2 + H2O = 4-methylsulfanyl-2-oxobutanoate + H2O2 + NH4(+). It catalyses the reaction L-isoleucine + O2 + H2O = (S)-3-methyl-2-oxopentanoate + H2O2 + NH4(+). The catalysed reaction is L-arginine + O2 + H2O = 5-guanidino-2-oxopentanoate + H2O2 + NH4(+). The enzyme catalyses L-tyrosine + O2 + H2O = 3-(4-hydroxyphenyl)pyruvate + H2O2 + NH4(+). Its activity is regulated as follows. Activity is increased by Mn(2+) ions. Inhibited by Zn(2+), Ni(2+), Co(2+), Cu(2+) and Al(3+). No significant activity change by Na(+), K(+), Ca(2+), Mg(2+) and Ba(2+) ions. Both isoform are completely inhibited by L-Cys and reduced glutathione. O-phenanthroline, beta-mercaptoethanol and PMSF completely inhibit the enzymatic activity of LAAOII, but have no activity on LAAOI. Iodoacetic acid inhibits the enzymatic activity of LAAOII by 46% but has no effect on the LAAOI activity. Catalyzes an oxidative deamination of predominantly hydrophobic and aromatic L-amino acids, thus producing hydrogen peroxide that may contribute to the diverse toxic effects of this enzyme. Shows high specificity for L-Arg, L-Met, L-Phe, L-Leu, L-Tyr, L-Ile and L-Trp, low specificity for L-Val, L-Ala, L-Asn, L-Gln, and no specificity for L-Pro, L-Ser, L-Thr, L-Cys, L-Gly and L-Asp. Exhibits diverse biological activities, such as hemorrhage, hemolysis, edema, antibacterial and antiparasitic activities, as well as regulation of platelet aggregation. Its effect on platelets is controversial, since it either induces aggregation or inhibits agonist-induced aggregation. These different effects are probably due to different experimental conditions. This is L-amino acid oxidase from Cerastes cerastes (Horned desert viper).